The sequence spans 120 residues: CLAVATA3/ESR (CLE)-related protein 9 (120 aa).

The N-terminal stretch at 1–26 (MTMTHLNRLILISLLFVSLLLKSSTA) is a signal peptide. N-linked (GlcNAc...) asparagine glycosylation occurs at asparagine 35. Positions 85–120 (RSSRKQPLLSPPPPEIDPRYGVDKRLVPSGPNPLHN) are disordered. Basic and acidic residues predominate over residues 100 to 110 (IDPRYGVDKRL). Proline 112 and proline 115 each carry hydroxyproline. An O-linked (Ara...) hydroxyproline glycan is attached at proline 115.

The protein belongs to the CLV3/ESR signal peptide family. Post-translationally, the O-glycosylation (arabinosylation) of the hydroxyproline Pro-115 enhances binding affinity of the CLE9p peptide for its receptor. In terms of tissue distribution, mostly expressed in leaves, flowers, stems and apex, and, to a lower extent, in seedlings, roots, siliques and pollen.

It is found in the secreted. The protein localises to the extracellular space. Its function is as follows. Extracellular signal peptide that regulates cell fate. Represses root apical meristem maintenance. Regulates the transition of protophloem cells from proliferation to differentiation, thus impinging on postembryonic growth capacity of the root meristem; this signaling pathway requires CRN and CLV2. The chain is CLAVATA3/ESR (CLE)-related protein 9 from Arabidopsis thaliana (Mouse-ear cress).